The sequence spans 264 residues: 3-methyl-2-oxobutanoate hydroxymethyltransferase (264 aa).

Mg(2+)-binding residues include Asp-45 and Asp-84. 3-methyl-2-oxobutanoate-binding positions include 45–46, Asp-84, and Lys-112; that span reads DS. Glu-114 is a binding site for Mg(2+). The active-site Proton acceptor is the Glu-181.

This sequence belongs to the PanB family. Homodecamer; pentamer of dimers. The cofactor is Mg(2+).

It is found in the cytoplasm. The catalysed reaction is 3-methyl-2-oxobutanoate + (6R)-5,10-methylene-5,6,7,8-tetrahydrofolate + H2O = 2-dehydropantoate + (6S)-5,6,7,8-tetrahydrofolate. Its pathway is cofactor biosynthesis; (R)-pantothenate biosynthesis; (R)-pantoate from 3-methyl-2-oxobutanoate: step 1/2. Catalyzes the reversible reaction in which hydroxymethyl group from 5,10-methylenetetrahydrofolate is transferred onto alpha-ketoisovalerate to form ketopantoate. The protein is 3-methyl-2-oxobutanoate hydroxymethyltransferase of Photobacterium profundum (strain SS9).